The following is a 278-amino-acid chain: Thiazole synthase (278 aa).

K109 functions as the Schiff-base intermediate with DXP in the catalytic mechanism. Residues G170, 197–198 (AG), and 219–220 (NT) contribute to the 1-deoxy-D-xylulose 5-phosphate site.

Belongs to the ThiG family. In terms of assembly, homotetramer. Forms heterodimers with either ThiH or ThiS.

It is found in the cytoplasm. It catalyses the reaction [ThiS sulfur-carrier protein]-C-terminal-Gly-aminoethanethioate + 2-iminoacetate + 1-deoxy-D-xylulose 5-phosphate = [ThiS sulfur-carrier protein]-C-terminal Gly-Gly + 2-[(2R,5Z)-2-carboxy-4-methylthiazol-5(2H)-ylidene]ethyl phosphate + 2 H2O + H(+). It participates in cofactor biosynthesis; thiamine diphosphate biosynthesis. In terms of biological role, catalyzes the rearrangement of 1-deoxy-D-xylulose 5-phosphate (DXP) to produce the thiazole phosphate moiety of thiamine. Sulfur is provided by the thiocarboxylate moiety of the carrier protein ThiS. In vitro, sulfur can be provided by H(2)S. In Cupriavidus necator (strain ATCC 17699 / DSM 428 / KCTC 22496 / NCIMB 10442 / H16 / Stanier 337) (Ralstonia eutropha), this protein is Thiazole synthase.